A 291-amino-acid chain; its full sequence is ATP synthase gamma chain (291 aa).

Belongs to the ATPase gamma chain family. In terms of assembly, F-type ATPases have 2 components, CF(1) - the catalytic core - and CF(0) - the membrane proton channel. CF(1) has five subunits: alpha(3), beta(3), gamma(1), delta(1), epsilon(1). CF(0) has three main subunits: a, b and c.

It is found in the cell inner membrane. Functionally, produces ATP from ADP in the presence of a proton gradient across the membrane. The gamma chain is believed to be important in regulating ATPase activity and the flow of protons through the CF(0) complex. In Cupriavidus pinatubonensis (strain JMP 134 / LMG 1197) (Cupriavidus necator (strain JMP 134)), this protein is ATP synthase gamma chain.